The sequence spans 338 residues: UDP-glucose 4-epimerase (338 aa).

NAD(+)-binding positions include 11–12 (YI), 31–36 (DNLCNS), 58–59 (DI), 80–84 (FAGLK), Asn-99, Ser-124, Tyr-149, Lys-153, and Phe-178. Substrate contacts are provided by Ser-124 and Tyr-149. Catalysis depends on Tyr-149, which acts as the Proton acceptor. Substrate contacts are provided by residues Asn-179, 199-200 (NL), 216-218 (AVF), Arg-231, 292-295 (RDGD), and Tyr-299.

Belongs to the NAD(P)-dependent epimerase/dehydratase family. In terms of assembly, homodimer. NAD(+) serves as cofactor.

The catalysed reaction is UDP-alpha-D-glucose = UDP-alpha-D-galactose. It participates in carbohydrate metabolism; galactose metabolism. In terms of biological role, involved in the metabolism of galactose. Catalyzes the conversion of UDP-galactose (UDP-Gal) to UDP-glucose (UDP-Glc) through a mechanism involving the transient reduction of NAD. This is UDP-glucose 4-epimerase (galE) from Salmonella typhi.